Here is an 831-residue protein sequence, read N- to C-terminus: Heat shock 70 kDa protein 15 (831 aa).

Disordered stretches follow at residues 502–579 (EEEV…KKKV) and 784–831 (IMTK…EGST). The segment covering 512–526 (DQSEETAKMDTDKAS) has biased composition (basic and acidic residues). 2 positions are modified to phosphoserine: Ser533 and Ser536. Over residues 787 to 800 (KPKPAAKAEAPQAK) the composition is skewed to low complexity.

It belongs to the heat shock protein 70 (TC 1.A.33) family. HSP110/SSE subfamily.

The protein resides in the cytoplasm. It is found in the nucleus. In cooperation with other chaperones, Hsp70s are key components that facilitate folding of de novo synthesized proteins, assist translocation of precursor proteins into organelles, and are responsible for degradation of damaged protein under stress conditions. This Arabidopsis thaliana (Mouse-ear cress) protein is Heat shock 70 kDa protein 15 (HSP70-15).